The primary structure comprises 299 residues: Plant-type L-asparaginase (299 aa).

The active-site Nucleophile is Thr169. Residues 197–200 and 220–223 contribute to the substrate site; these read RVGD and TGVG.

The protein belongs to the Ntn-hydrolase family. As to quaternary structure, heterotetramer of two alpha and two beta chains arranged as a dimer of alpha/beta heterodimers. The uncleaved protein forms homodimers. Post-translationally, autocleaved. Generates the alpha and beta subunits. The N-terminal residue of the beta subunit is thought to be responsible for the nucleophile hydrolase activity.

The catalysed reaction is L-asparagine + H2O = L-aspartate + NH4(+). Divalent metal ions and EDTA do not have significant effect on enzyme activity, indicating that activity is metal-independent. Its function is as follows. Catalyzes the hydrolysis of L-asparagine into L-aspartate and ammonia. Also displays D-asparaginase activity, which is about 20% of the L-asparaginase activity. Does not exhibit glutaminase activity. In Pyrobaculum calidifontis (strain DSM 21063 / JCM 11548 / VA1), this protein is Plant-type L-asparaginase.